The following is a 180-amino-acid chain: Shikimate kinase (180 aa).

14–19 provides a ligand contact to ATP; sequence GAGKST. Residue Ser-18 participates in Mg(2+) binding. Substrate-binding residues include Asp-36, Arg-60, and Gly-82. Arg-120 contacts ATP. Substrate is bound at residue Arg-139.

The protein belongs to the shikimate kinase family. As to quaternary structure, monomer. Mg(2+) is required as a cofactor.

The protein localises to the cytoplasm. The enzyme catalyses shikimate + ATP = 3-phosphoshikimate + ADP + H(+). It functions in the pathway metabolic intermediate biosynthesis; chorismate biosynthesis; chorismate from D-erythrose 4-phosphate and phosphoenolpyruvate: step 5/7. Functionally, catalyzes the specific phosphorylation of the 3-hydroxyl group of shikimic acid using ATP as a cosubstrate. The protein is Shikimate kinase of Chromohalobacter salexigens (strain ATCC BAA-138 / DSM 3043 / CIP 106854 / NCIMB 13768 / 1H11).